An 81-amino-acid chain; its full sequence is Putative defensin-like protein 56 (81 aa).

Residues 1–23 (MNITKAYVIFFLVVILTNSLSNS) form the signal peptide. Intrachain disulfides connect C46/C80, C50/C73, C59/C78, and C63/C79.

The protein belongs to the DEFL family.

It localises to the secreted. The protein is Putative defensin-like protein 56 of Arabidopsis thaliana (Mouse-ear cress).